We begin with the raw amino-acid sequence, 450 residues long: Tubulin beta-3 chain (450 aa).

The short motif at 1-4 (MREI) is the MREI motif element. GDP contacts are provided by G10, Q11, C12, and Q15. Residue Q11 coordinates GTP. E69 contributes to the GTP binding site. E69 contributes to the Mg(2+) binding site. Positions 99, 138, 142, 143, and 144 each coordinate GDP. GTP is bound by residues S138, G142, T143, and G144. Phosphoserine; by CDK1 is present on S172. The GDP site is built by D177, N204, Y222, and N226. N204 is a binding site for GTP. N226 provides a ligand contact to GTP. Residues 425–450 (YQDATAEEEGEMYEDDEEESEAQGPK) form a disordered region. Positions 429–450 (TAEEEGEMYEDDEEESEAQGPK) are enriched in acidic residues. Position 438 is a 5-glutamyl polyglutamate (E438). S444 bears the Phosphoserine mark.

The protein belongs to the tubulin family. Heterodimer of alpha- and beta-tubulin. A typical microtubule is a hollow water-filled tube with an outer diameter of 25 nm and an inner diameter of 15 nM. Alpha-beta heterodimers associate head-to-tail to form protofilaments running lengthwise along the microtubule wall with the beta-tubulin subunit facing the microtubule plus end conferring a structural polarity. Microtubules usually have 13 protofilaments but different protofilament numbers can be found in some organisms and specialized cells. Interacts with gamma-tubulin; the interaction allows microtubules to nucleate from the gamma-tubulin ring complex (gTuRC). Interacts with UNC5C (via cytoplasmic domain); this interaction is decreased by NTN1/Netrin-1. Interacts with NLRP5/MATER at cytoskeleton microtubules. Interacts with DPYSL5. Interacts with CFAP61. Mg(2+) serves as cofactor. Some glutamate residues at the C-terminus are polyglutamylated, resulting in polyglutamate chains on the gamma-carboxyl group. Polyglutamylation plays a key role in microtubule severing by spastin (SPAST). SPAST preferentially recognizes and acts on microtubules decorated with short polyglutamate tails: severing activity by SPAST increases as the number of glutamates per tubulin rises from one to eight, but decreases beyond this glutamylation threshold. Glutamylation is also involved in cilia motility. In terms of processing, some glutamate residues at the C-terminus are monoglycylated but not polyglycylated due to the absence of functional TTLL10 in human. Monoglycylation is mainly limited to tubulin incorporated into cilia and flagella axonemes, which is required for their stability and maintenance. Flagella glycylation controls sperm motility. Both polyglutamylation and monoglycylation can coexist on the same protein on adjacent residues, and lowering glycylation levels increases polyglutamylation, and reciprocally. Post-translationally, phosphorylated on Ser-172 by CDK1 during the cell cycle, from metaphase to telophase, but not in interphase. This phosphorylation inhibits tubulin incorporation into microtubules. Expression is primarily restricted to central and peripheral nervous system. Greatly increased expression in most cancerous tissues.

The protein resides in the cytoplasm. It is found in the cytoskeleton. The protein localises to the cell projection. Its subcellular location is the growth cone. It localises to the lamellipodium. The protein resides in the filopodium. Its function is as follows. Tubulin is the major constituent of microtubules, protein filaments consisting of alpha- and beta-tubulin heterodimers. Microtubules grow by the addition of GTP-tubulin dimers to the microtubule end, where a stabilizing cap forms. Below the cap, alpha-beta tubulin heterodimers are in GDP-bound state, owing to GTPase activity of alpha-tubulin. TUBB3 plays a critical role in proper axon guidance and maintenance. Binding of NTN1/Netrin-1 to its receptor UNC5C might cause dissociation of UNC5C from polymerized TUBB3 in microtubules and thereby lead to increased microtubule dynamics and axon repulsion. Plays a role in dorsal root ganglion axon projection towards the spinal cord. The polypeptide is Tubulin beta-3 chain (TUBB3) (Homo sapiens (Human)).